Reading from the N-terminus, the 136-residue chain is Large ribosomal subunit protein uL16 (136 aa).

This sequence belongs to the universal ribosomal protein uL16 family. In terms of assembly, part of the 50S ribosomal subunit.

Functionally, binds 23S rRNA and is also seen to make contacts with the A and possibly P site tRNAs. This chain is Large ribosomal subunit protein uL16, found in Shigella flexneri.